The sequence spans 123 residues: Large ribosomal subunit protein uL14c (123 aa).

Belongs to the universal ribosomal protein uL14 family. In terms of assembly, part of the 50S ribosomal subunit.

Its subcellular location is the plastid. The protein resides in the chloroplast. Binds to 23S rRNA. This is Large ribosomal subunit protein uL14c from Triticum aestivum (Wheat).